Reading from the N-terminus, the 333-residue chain is GDP-mannose transporter GONST1 (333 aa).

The next 9 helical transmembrane spans lie at 33–55, 62–84, 99–121, 153–170, 174–196, 216–238, 253–275, 282–304, and 308–325; these read ALLS…KFVL, AGIF…LSLM, VWFP…LKYI, VWAA…GGIT, FNAV…SLTL, SMVL…FFNE, FWMV…MWFL, TYSL…LFNV, and LQNS…VVFA.

This sequence belongs to the nucleotide-sugar transporter family. GDP-Mannose:GMP antiporter (GMA) (TC 2.A.7.13) subfamily.

The protein localises to the golgi apparatus membrane. Its function is as follows. Involved in the import of GDP-mannose from the cytoplasm into the Golgi lumen. Required for the luminal synthesis of a variety of plant cell surface components. Is required for the correct mannosylation of the glycosylinositol phosphoceramides (GIPC). Can indifferently transport GDP-mannose, GDP-Glucose, GDP-Fucose or GDP-Galactose in vitro. In Arabidopsis thaliana (Mouse-ear cress), this protein is GDP-mannose transporter GONST1.